The sequence spans 320 residues: Malate dehydrogenase 2 (320 aa).

Residues 10–15 (GAGQIG) and aspartate 34 each bind NAD(+). Arginine 83 and arginine 89 together coordinate substrate. NAD(+) contacts are provided by residues asparagine 96 and 119–121 (ITN). Residues asparagine 121 and arginine 152 each contribute to the substrate site. The active-site Proton acceptor is histidine 176.

It belongs to the LDH/MDH superfamily. MDH type 3 family.

The catalysed reaction is (S)-malate + NAD(+) = oxaloacetate + NADH + H(+). Catalyzes the reversible oxidation of malate to oxaloacetate. This chain is Malate dehydrogenase 2, found in Rhodopseudomonas palustris (strain BisB18).